The chain runs to 382 residues: Succinyl-diaminopimelate desuccinylase (382 aa).

Zn(2+) is bound at residue His-73. Asp-75 is a catalytic residue. Zn(2+) is bound at residue Asp-106. The Proton acceptor role is filled by Glu-140. Zn(2+) is bound by residues Glu-141, Glu-169, and His-355.

Belongs to the peptidase M20A family. DapE subfamily. As to quaternary structure, homodimer. The cofactor is Zn(2+). Co(2+) serves as cofactor.

It catalyses the reaction N-succinyl-(2S,6S)-2,6-diaminopimelate + H2O = (2S,6S)-2,6-diaminopimelate + succinate. It functions in the pathway amino-acid biosynthesis; L-lysine biosynthesis via DAP pathway; LL-2,6-diaminopimelate from (S)-tetrahydrodipicolinate (succinylase route): step 3/3. Catalyzes the hydrolysis of N-succinyl-L,L-diaminopimelic acid (SDAP), forming succinate and LL-2,6-diaminopimelate (DAP), an intermediate involved in the bacterial biosynthesis of lysine and meso-diaminopimelic acid, an essential component of bacterial cell walls. The polypeptide is Succinyl-diaminopimelate desuccinylase (Cellvibrio japonicus (strain Ueda107) (Pseudomonas fluorescens subsp. cellulosa)).